We begin with the raw amino-acid sequence, 79 residues long: D-alanyl carrier protein (79 aa).

The Carrier domain maps to methionine 1–glutamine 77. At serine 35 the chain carries O-(pantetheine 4'-phosphoryl)serine.

Belongs to the DltC family. Post-translationally, 4'-phosphopantetheine is transferred from CoA to a specific serine of apo-DCP.

Its subcellular location is the cytoplasm. The protein operates within cell wall biogenesis; lipoteichoic acid biosynthesis. Functionally, carrier protein involved in the D-alanylation of lipoteichoic acid (LTA). The loading of thioester-linked D-alanine onto DltC is catalyzed by D-alanine--D-alanyl carrier protein ligase DltA. The DltC-carried D-alanyl group is further transferred to cell membrane phosphatidylglycerol (PG) by forming an ester bond, probably catalyzed by DltD. D-alanylation of LTA plays an important role in modulating the properties of the cell wall in Gram-positive bacteria, influencing the net charge of the cell wall. In Streptococcus pyogenes serotype M1, this protein is D-alanyl carrier protein.